Reading from the N-terminus, the 139-residue chain is MKPAARRRARECAVQALYSWQLSHNDIADVEYQFLAEQDVKDVDVMYFRELLSGVATNSGYLDGLMKPYLSRQLEELGQVEKAVLRIALFELSKRDDVPYKVAINEAIELAKVFGAEDSHKFVNGVLDKAAPHIRPNKK.

It belongs to the NusB family.

In terms of biological role, involved in transcription antitermination. Required for transcription of ribosomal RNA (rRNA) genes. Binds specifically to the boxA antiterminator sequence of the ribosomal RNA (rrn) operons. The polypeptide is Transcription antitermination protein NusB (Cronobacter sakazakii (strain ATCC BAA-894) (Enterobacter sakazakii)).